The sequence spans 316 residues: Aspartate carbamoyltransferase catalytic subunit (316 aa).

Carbamoyl phosphate contacts are provided by R56 and T57. Residue K84 participates in L-aspartate binding. Positions 106, 139, and 142 each coordinate carbamoyl phosphate. L-aspartate is bound by residues R172 and R224. 2 residues coordinate carbamoyl phosphate: G268 and P269.

This sequence belongs to the aspartate/ornithine carbamoyltransferase superfamily. ATCase family. Heterododecamer (2C3:3R2) of six catalytic PyrB chains organized as two trimers (C3), and six regulatory PyrI chains organized as three dimers (R2).

The enzyme catalyses carbamoyl phosphate + L-aspartate = N-carbamoyl-L-aspartate + phosphate + H(+). The protein operates within pyrimidine metabolism; UMP biosynthesis via de novo pathway; (S)-dihydroorotate from bicarbonate: step 2/3. Catalyzes the condensation of carbamoyl phosphate and aspartate to form carbamoyl aspartate and inorganic phosphate, the committed step in the de novo pyrimidine nucleotide biosynthesis pathway. The chain is Aspartate carbamoyltransferase catalytic subunit from Ligilactobacillus salivarius (strain UCC118) (Lactobacillus salivarius).